Consider the following 212-residue polypeptide: Probable GTP-binding protein EngB (212 aa).

The EngB-type G domain occupies 27-211 (GPPEIAFAGR…QAAIVLAANG (185 aa)). GTP contacts are provided by residues 35–42 (GRSNVGKS), 62–66 (GRTQE), 89–92 (DMPG), 156–159 (TKTD), and 190–192 (TSS). Residues Ser-42 and Thr-64 each contribute to the Mg(2+) site.

The protein belongs to the TRAFAC class TrmE-Era-EngA-EngB-Septin-like GTPase superfamily. EngB GTPase family. The cofactor is Mg(2+).

Necessary for normal cell division and for the maintenance of normal septation. This chain is Probable GTP-binding protein EngB, found in Mesorhizobium japonicum (strain LMG 29417 / CECT 9101 / MAFF 303099) (Mesorhizobium loti (strain MAFF 303099)).